A 245-amino-acid chain; its full sequence is DNA polymerase sliding clamp (245 aa).

Belongs to the PCNA family. In terms of assembly, homotrimer. The subunits circularize to form a toroid; DNA passes through its center. Replication factor C (RFC) is required to load the toroid on the DNA.

Functionally, sliding clamp subunit that acts as a moving platform for DNA processing. Responsible for tethering the catalytic subunit of DNA polymerase and other proteins to DNA during high-speed replication. This Methanosarcina mazei (strain ATCC BAA-159 / DSM 3647 / Goe1 / Go1 / JCM 11833 / OCM 88) (Methanosarcina frisia) protein is DNA polymerase sliding clamp.